The primary structure comprises 146 residues: Linear conopeptide (146 aa).

Residues 1–19 (MLRLIIAAAVLVSACLAYP) form the signal peptide. A propeptide spanning residues 20-34 (QRREGAPADAANLQS) is cleaved from the precursor. Met-40 bears the Methionine sulfoxide; partial; in Cn2 mark. 2 propeptides span residues 58–80 (FLPF…LEKR) and 104–146 (FLHN…DKEQ). The disordered stretch occupies residues 107–146 (NEKGDKHPFANVDSADTDLGQFEPSAENKNGEFRFFDKEQ). The segment covering 135–146 (KNGEFRFFDKEQ) has biased composition (basic and acidic residues).

As to expression, expressed by the venom duct.

The protein resides in the secreted. The polypeptide is Linear conopeptide (Conus consors (Singed cone)).